We begin with the raw amino-acid sequence, 229 residues long: N-acetyltransferase MPR1 (229 aa).

The 155-residue stretch at 65–219 (FNLEIESGKT…DAIIYGKDLT (155 aa)) folds into the N-acetyltransferase domain. Residue N135 coordinates substrate. 145–150 (RGQKVG) lines the CoA pocket. A substrate-binding site is contributed by 172 to 173 (NL).

The protein belongs to the acetyltransferase family. In terms of assembly, homodimer. Not glycosylated.

The protein localises to the cytoplasm. It is found in the mitochondrion. It catalyses the reaction L-glutamate 5-semialdehyde + acetyl-CoA = N-acetyl-L-glutamate 5-semialdehyde + CoA + H(+). In terms of biological role, N-acetyltransferase involved in oxidative stress resistance. Acetylates the toxic proline metabolism intermediate (S)-1-pyrroline-5-carboxylate (P5C), or more likely its spontaneously forming tautomer glutamate-5-semialdehyde (GSA) into N-acetyl-GSA for arginine synthesis in the mitochondria. P5C has been shown to increase the levels of reactive oxygen species (ROS) in the cell by inhibiting the function of the respiratory chain in the mitochondria. The enzyme is able to reduce intracellular ROS levels under P5C-induced oxidative stress and protects cells from damage by oxidative stress. Also acetylates and thereby detoxifies the proline analog azetidine-2-carboxylate (AZC), however it is unlikely that AZC is a natural substrate as it occurs only in plants belonging to the Lilaceae family. Does not acetylate proline. The protein is N-acetyltransferase MPR1 of Saccharomyces cerevisiae (Baker's yeast).